The following is a 415-amino-acid chain: Putative O-antigen transporter (415 aa).

The Cytoplasmic portion of the chain corresponds to 1–11 (MNTNKLSLRRN). Residues 12–32 (VIYLAVVQGSNYLLPLLTFPY) traverse the membrane as a helical segment. Residues 33–41 (LVRTLGPEN) lie on the Periplasmic side of the membrane. A helical transmembrane segment spans residues 42-62 (FGIFGFCQATMLYMIMFVEYG). Topologically, residues 63 to 83 (FNLTATQSIAKAADSKDKVTS) are cytoplasmic. The helical transmembrane segment at 84–104 (IFWAVIFSKIVLIVITLIFLT) threads the bilayer. Residues 105-117 (SMTLLVPEYNKHA) are Periplasmic-facing. Residues 118–138 (VIIWSFVPALVGNLIYPIWLF) form a helical membrane-spanning segment. Residues 139–173 (QGKEKMKWLTLSSILSRLAIIPLTFIFVNTKSDIA) are Cytoplasmic-facing. Residues 174-194 (IAGFIQSSANLVAGIIALAIV) traverse the membrane as a helical segment. Residues 195 to 220 (VHEGWIGKVTLSLHNVRRSLADGFHV) are Periplasmic-facing. The helical transmembrane segment at 221-241 (FISTSAISLYSTGIVIILGFI) threads the bilayer. Topologically, residues 242-295 (SGPTSVGNFNAANTIRNALQGLLNPITQAIYPRISSTLVLNRVKGVILIKKSLT) are cytoplasmic. Residues 296-316 (CLSLIGGAFSLILLLGASILV) traverse the membrane as a helical segment. Residues 317-328 (KISIGPGYDNAV) lie on the Periplasmic side of the membrane. The chain crosses the membrane as a helical span at residues 329–349 (IVLMIISPLPFLISLSNVYGI). The Cytoplasmic portion of the chain corresponds to 350–362 (QVMLTHNYKKEFS). A helical transmembrane segment spans residues 363 to 383 (KILIAAGLLSLLLIFPLTTLF). Residues 384–385 (KE) lie on the Periplasmic side of the membrane. The helical transmembrane segment at 386-406 (IGAAITLLATECLVTSLMLMF) threads the bilayer. The Cytoplasmic segment spans residues 407 to 415 (VRNNKLLVC).

Belongs to the polysaccharide synthase family.

The protein resides in the cell inner membrane. It participates in bacterial outer membrane biogenesis; LPS O-antigen biosynthesis. Its function is as follows. May be involved in the translocation process of the nascent O-polysaccharide molecules and/or its ligation to lipid A core units. The sequence is that of Putative O-antigen transporter (rfbX) from Escherichia coli (strain K12).